Consider the following 241-residue polypeptide: TKQVEKNEDGDQKIEQDGIKPEDKAHKAATKIQASFRGHITRKKLKGEKKGDAPASETDAADKKEEGPAGGAAENKESEAPAATEAAAADSAQQEEGSKDSSAPAEEKKGDGAADTGSEQPAPQAATPAASSEEKTAAAAAPERESTPKASTDNSPSLKADEAQDKEEPKQADVPAADTTATTTPAAEDATAKATAQPQMETVESSQTEEKTDAVEETKPTESAQQEEMKEEESKADQENA.

A compositionally biased stretch (basic and acidic residues) spans 1-26; sequence TKQVEKNEDGDQKIEQDGIKPEDKAH. Residues 1 to 241 form a disordered region; it reads TKQVEKNEDG…EESKADQENA (241 aa). The region spanning 25-54 is the IQ domain; that stretch reads AHKAATKIQASFRGHITRKKLKGEKKGDAP. Composition is skewed to low complexity over residues 80–95 and 118–131; these read APAATEAAAADSAQQE and SEQPAPQAATPAAS. Composition is skewed to basic and acidic residues over residues 132 to 147 and 159 to 171; these read SEEKTAAAAAPEREST and KADEAQDKEEPKQ. The segment covering 172–198 has biased composition (low complexity); that stretch reads ADVPAADTTATTTPAAEDATAKATAQP. 2 stretches are compositionally biased toward basic and acidic residues: residues 208 to 220 and 232 to 241; these read TEEKTDAVEETKP and EESKADQENA.

It belongs to the neuromodulin family. Binds calmodulin with a greater affinity in the absence of Ca(2+) than in its presence. In terms of processing, palmitoylated. Palmitoylation is essential for plasma membrane association.

It localises to the cell membrane. The protein resides in the cell projection. The protein localises to the growth cone membrane. Its subcellular location is the synapse. It is found in the filopodium membrane. Its function is as follows. This protein is associated with nerve growth. It is a major component of the motile 'growth cones' that form the tips of elongating axons. Plays a role in axonal and dendritic filopodia induction. This Serinus canaria (Island canary) protein is Neuromodulin (GAP43).